Reading from the N-terminus, the 164-residue chain is Cyclic pyranopterin monophosphate synthase (164 aa).

Substrate-binding positions include 75–77 (MCH) and 116–117 (ME). The active site involves Asp131.

Belongs to the MoaC family. As to quaternary structure, homohexamer; trimer of dimers.

The catalysed reaction is (8S)-3',8-cyclo-7,8-dihydroguanosine 5'-triphosphate = cyclic pyranopterin phosphate + diphosphate. Its pathway is cofactor biosynthesis; molybdopterin biosynthesis. Functionally, catalyzes the conversion of (8S)-3',8-cyclo-7,8-dihydroguanosine 5'-triphosphate to cyclic pyranopterin monophosphate (cPMP). The sequence is that of Cyclic pyranopterin monophosphate synthase from Staphylococcus aureus (strain Mu3 / ATCC 700698).